The primary structure comprises 134 residues: Profilin-2 (134 aa).

An intrachain disulfide couples C13 to C118. The Involved in PIP2 interaction motif lies at 84–100; sequence AVIRGKKGSGGITIKKT. The residue at position 114 (T114) is a Phosphothreonine.

This sequence belongs to the profilin family. Occurs in many kinds of cells as a complex with monomeric actin in a 1:1 ratio. In terms of processing, phosphorylated by MAP kinases.

Its subcellular location is the cytoplasm. The protein localises to the cytoskeleton. Functionally, binds to actin and affects the structure of the cytoskeleton. At high concentrations, profilin prevents the polymerization of actin, whereas it enhances it at low concentrations. This is Profilin-2 from Olea europaea (Common olive).